The sequence spans 590 residues: DNA primase (590 aa).

The segment at 37–61 (CPFHTEKTPSFIVNPAGAHYHCFGC) adopts a CHC2-type zinc-finger fold. The Toprim domain occupies 253–333 (KKVILVEGQA…QMSVFVCKLP (81 aa)). Positions 259, 304, and 306 each coordinate Mg(2+).

It belongs to the DnaG primase family. As to quaternary structure, monomer. Interacts with DnaB. Zn(2+) is required as a cofactor. The cofactor is Mg(2+).

It catalyses the reaction ssDNA + n NTP = ssDNA/pppN(pN)n-1 hybrid + (n-1) diphosphate.. RNA polymerase that catalyzes the synthesis of short RNA molecules used as primers for DNA polymerase during DNA replication. The sequence is that of DNA primase from Chlamydia pneumoniae (Chlamydophila pneumoniae).